A 388-amino-acid chain; its full sequence is Succinate--CoA ligase [ADP-forming] subunit beta (388 aa).

Positions 9–244 constitute an ATP-grasp domain; that stretch reads KQLFAEYGLP…PSQDDPREAH (236 aa). ATP contacts are provided by residues Lys46, 53 to 55, Glu99, Thr102, and Glu107; that span reads GRG. Residues Asn199 and Asp213 each contribute to the Mg(2+) site. Residues Asn264 and 321–323 contribute to the substrate site; that span reads GIV.

Belongs to the succinate/malate CoA ligase beta subunit family. In terms of assembly, heterotetramer of two alpha and two beta subunits. Mg(2+) is required as a cofactor.

It catalyses the reaction succinate + ATP + CoA = succinyl-CoA + ADP + phosphate. It carries out the reaction GTP + succinate + CoA = succinyl-CoA + GDP + phosphate. The protein operates within carbohydrate metabolism; tricarboxylic acid cycle; succinate from succinyl-CoA (ligase route): step 1/1. Succinyl-CoA synthetase functions in the citric acid cycle (TCA), coupling the hydrolysis of succinyl-CoA to the synthesis of either ATP or GTP and thus represents the only step of substrate-level phosphorylation in the TCA. The beta subunit provides nucleotide specificity of the enzyme and binds the substrate succinate, while the binding sites for coenzyme A and phosphate are found in the alpha subunit. The chain is Succinate--CoA ligase [ADP-forming] subunit beta from Stutzerimonas stutzeri (strain A1501) (Pseudomonas stutzeri).